A 251-amino-acid chain; its full sequence is PF03932 family protein CutC (251 aa).

Belongs to the CutC family.

Its subcellular location is the cytoplasm. In Edwardsiella ictaluri (strain 93-146), this protein is PF03932 family protein CutC.